Consider the following 233-residue polypeptide: Superoxide dismutase [Mn] 3.4, mitochondrial (233 aa).

A mitochondrion-targeting transit peptide spans 1-29; the sequence is MALRTLASKNALSFALGGAARPSAASARG. Residues histidine 57, histidine 105, aspartate 194, and histidine 198 each contribute to the Mn(2+) site.

The protein belongs to the iron/manganese superoxide dismutase family. Homotetramer. The cofactor is Mn(2+).

Its subcellular location is the mitochondrion matrix. It catalyses the reaction 2 superoxide + 2 H(+) = H2O2 + O2. In terms of biological role, destroys superoxide anion radicals which are normally produced within the cells and which are toxic to biological systems. This chain is Superoxide dismutase [Mn] 3.4, mitochondrial (SODA.3), found in Zea mays (Maize).